Here is a 244-residue protein sequence, read N- to C-terminus: Type III pantothenate kinase (244 aa).

An ATP-binding site is contributed by Val-12–Arg-19. Substrate contacts are provided by residues Tyr-79 and Gly-83–Arg-86. Catalysis depends on Asp-85, which acts as the Proton acceptor. Asp-105 is a K(+) binding site. Residue Thr-108 participates in ATP binding. Thr-163 contributes to the substrate binding site.

It belongs to the type III pantothenate kinase family. Homodimer. The cofactor is NH4(+). It depends on K(+) as a cofactor.

It localises to the cytoplasm. It catalyses the reaction (R)-pantothenate + ATP = (R)-4'-phosphopantothenate + ADP + H(+). It functions in the pathway cofactor biosynthesis; coenzyme A biosynthesis; CoA from (R)-pantothenate: step 1/5. Functionally, catalyzes the phosphorylation of pantothenate (Pan), the first step in CoA biosynthesis. In Synechococcus sp. (strain JA-3-3Ab) (Cyanobacteria bacterium Yellowstone A-Prime), this protein is Type III pantothenate kinase.